We begin with the raw amino-acid sequence, 929 residues long: Isoleucine--tRNA ligase (929 aa).

A 'HIGH' region motif is present at residues 58 to 68 (PYANGDIHIGH). L-isoleucyl-5'-AMP is bound at residue glutamate 563. The short motif at 605–609 (KMSKS) is the 'KMSKS' region element. Lysine 608 contacts ATP. Residues cysteine 892, cysteine 895, cysteine 912, and cysteine 915 each coordinate Zn(2+).

This sequence belongs to the class-I aminoacyl-tRNA synthetase family. IleS type 1 subfamily. In terms of assembly, monomer. Zn(2+) serves as cofactor.

It is found in the cytoplasm. The enzyme catalyses tRNA(Ile) + L-isoleucine + ATP = L-isoleucyl-tRNA(Ile) + AMP + diphosphate. Catalyzes the attachment of isoleucine to tRNA(Ile). As IleRS can inadvertently accommodate and process structurally similar amino acids such as valine, to avoid such errors it has two additional distinct tRNA(Ile)-dependent editing activities. One activity is designated as 'pretransfer' editing and involves the hydrolysis of activated Val-AMP. The other activity is designated 'posttransfer' editing and involves deacylation of mischarged Val-tRNA(Ile). The chain is Isoleucine--tRNA ligase from Neisseria gonorrhoeae (strain ATCC 700825 / FA 1090).